Consider the following 358-residue polypeptide: Hydroxyproline O-arabinosyltransferase 2 (358 aa).

Residues 7–26 (YFFPILMTLSLFLIIRYNYI) form a helical; Signal-anchor membrane-spanning segment.

As to expression, ubiquitous.

The protein localises to the golgi apparatus. It is found in the cis-Golgi network membrane. It carries out the reaction trans-4-hydroxy-L-prolyl-[protein] + UDP-beta-L-arabinofuranose = O-(beta-L-arabinofuranosyl)-trans-4-hydroxy-L-prolyl-[protein] + UDP + H(+). In terms of biological role, glycosyltransferase involved in the O-arabinosylation of several proteins including extensins and small signaling peptides. Catalyzes the transfer of the initial L-arabinose to the hydroxyl group of Hyp residues. Contributes redundantly with HPAT1 and HPAT3 to arabinosylation of EXT3. In Arabidopsis thaliana (Mouse-ear cress), this protein is Hydroxyproline O-arabinosyltransferase 2.